We begin with the raw amino-acid sequence, 279 residues long: MATH domain and coiled-coil domain-containing protein At1g31390 (279 aa).

The MATH domain occupies 6 to 134; sequence EKKITWTIKN…NGDVKIVVEV (129 aa). Residues 235–271 adopt a coiled-coil conformation; the sequence is KLDWLEKKLKEVCEARVQEIDEEWKDLTDLKENWSSD.

The polypeptide is MATH domain and coiled-coil domain-containing protein At1g31390 (Arabidopsis thaliana (Mouse-ear cress)).